We begin with the raw amino-acid sequence, 200 residues long: 3-isopropylmalate dehydratase small subunit (200 aa).

Belongs to the LeuD family. LeuD type 1 subfamily. As to quaternary structure, heterodimer of LeuC and LeuD.

It carries out the reaction (2R,3S)-3-isopropylmalate = (2S)-2-isopropylmalate. Its pathway is amino-acid biosynthesis; L-leucine biosynthesis; L-leucine from 3-methyl-2-oxobutanoate: step 2/4. In terms of biological role, catalyzes the isomerization between 2-isopropylmalate and 3-isopropylmalate, via the formation of 2-isopropylmaleate. This is 3-isopropylmalate dehydratase small subunit from Methylobacterium radiotolerans (strain ATCC 27329 / DSM 1819 / JCM 2831 / NBRC 15690 / NCIMB 10815 / 0-1).